The sequence spans 156 residues: Small ribosomal subunit protein uS7 (156 aa).

This sequence belongs to the universal ribosomal protein uS7 family. As to quaternary structure, part of the 30S ribosomal subunit. Contacts proteins S9 and S11.

Its function is as follows. One of the primary rRNA binding proteins, it binds directly to 16S rRNA where it nucleates assembly of the head domain of the 30S subunit. Is located at the subunit interface close to the decoding center, probably blocks exit of the E-site tRNA. In Lacticaseibacillus casei (strain BL23) (Lactobacillus casei), this protein is Small ribosomal subunit protein uS7.